A 377-amino-acid polypeptide reads, in one-letter code: 1-deoxy-D-xylulose 5-phosphate reductoisomerase (377 aa).

NADPH contacts are provided by Thr20, Gly21, Ile23, Asn46, and Asn115. A 1-deoxy-D-xylulose 5-phosphate-binding site is contributed by Lys116. An NADPH-binding site is contributed by Glu117. Asp141 contacts Mn(2+). 4 residues coordinate 1-deoxy-D-xylulose 5-phosphate: Ser142, Glu143, Ser166, and His189. Position 143 (Glu143) interacts with Mn(2+). Residue Gly195 coordinates NADPH. 1-deoxy-D-xylulose 5-phosphate-binding residues include Ser202, Asn207, Lys208, and Glu211. Glu211 provides a ligand contact to Mn(2+).

The protein belongs to the DXR family. Mg(2+) is required as a cofactor. It depends on Mn(2+) as a cofactor.

It carries out the reaction 2-C-methyl-D-erythritol 4-phosphate + NADP(+) = 1-deoxy-D-xylulose 5-phosphate + NADPH + H(+). It functions in the pathway isoprenoid biosynthesis; isopentenyl diphosphate biosynthesis via DXP pathway; isopentenyl diphosphate from 1-deoxy-D-xylulose 5-phosphate: step 1/6. Functionally, catalyzes the NADPH-dependent rearrangement and reduction of 1-deoxy-D-xylulose-5-phosphate (DXP) to 2-C-methyl-D-erythritol 4-phosphate (MEP). The protein is 1-deoxy-D-xylulose 5-phosphate reductoisomerase of Malacoplasma penetrans (strain HF-2) (Mycoplasma penetrans).